The sequence spans 447 residues: Alkylglycerol monooxygenase (447 aa).

2 consecutive transmembrane segments (helical) span residues 43–63 (ATPF…ILKG) and 111–131 (WDSP…YYWF). One can recognise a Fatty acid hydroxylase domain in the interval 118-249 (YLTFLGVDFG…LIIWDRIFGT (132 aa)). The short motif at 132 to 136 (HRMAH) is the Histidine box-1 element. Residues 145–149 (HQAHH) carry the Histidine box-2 motif. A helical transmembrane segment spans residues 170 to 190 (SWVFYCPLALFVPPSVFAVHI). The short motif at 221–225 (HRVHH) is the Histidine box-3 element. 3 consecutive transmembrane segments (helical) span residues 334-354 (FLKI…EETF), 363-383 (VTIL…GFLL), and 413-433 (IESL…FWGV).

The protein belongs to the sterol desaturase family. TMEM195 subfamily. Requires Fe cation as cofactor.

The protein resides in the endoplasmic reticulum membrane. The enzyme catalyses 1-O-(1,2-saturated-alkyl)-sn-glycerol + (6R)-L-erythro-5,6,7,8-tetrahydrobiopterin + O2 = a 1-(1-hydroxyalkyl)-sn-glycerol + (6R)-L-erythro-6,7-dihydrobiopterin + H2O. Its function is as follows. Glyceryl-ether monooxygenase that cleaves the O-alkyl bond of ether lipids. Ether lipids are essential components of brain membranes. The chain is Alkylglycerol monooxygenase (Agmo) from Rattus norvegicus (Rat).